Reading from the N-terminus, the 274-residue chain is Serine/threonine-protein kinase 1 (274 aa).

The Protein kinase domain occupies 17 to 265 (ARTALHLVNG…YEVIQKNTYW (249 aa)). Residues 23–31 (LVNGKFGKV) and lysine 46 contribute to the ATP site. Aspartate 133 functions as the Proton acceptor in the catalytic mechanism.

Belongs to the protein kinase superfamily. Ser/Thr protein kinase family.

It catalyses the reaction L-seryl-[protein] + ATP = O-phospho-L-seryl-[protein] + ADP + H(+). The catalysed reaction is L-threonyl-[protein] + ATP = O-phospho-L-threonyl-[protein] + ADP + H(+). In terms of biological role, in vitro, can phosphorylate histone H1. The polypeptide is Serine/threonine-protein kinase 1 (PK1) (Lymantria dispar multicapsid nuclear polyhedrosis virus (LdMNPV)).